Reading from the N-terminus, the 634-residue chain is Threonine--tRNA ligase (634 aa).

Residues 1–61 enclose the TGS domain; it reads MINIRFPDGS…NSNCELRLIT (61 aa). The catalytic stretch occupies residues 241-532; that stretch reads DHRKIGKVLD…LIEHYAGNLP (292 aa). 3 residues coordinate Zn(2+): cysteine 332, histidine 383, and histidine 509.

Belongs to the class-II aminoacyl-tRNA synthetase family. In terms of assembly, homodimer. Requires Zn(2+) as cofactor.

The protein resides in the cytoplasm. The catalysed reaction is tRNA(Thr) + L-threonine + ATP = L-threonyl-tRNA(Thr) + AMP + diphosphate + H(+). Functionally, catalyzes the attachment of threonine to tRNA(Thr) in a two-step reaction: L-threonine is first activated by ATP to form Thr-AMP and then transferred to the acceptor end of tRNA(Thr). Also edits incorrectly charged L-seryl-tRNA(Thr). The polypeptide is Threonine--tRNA ligase (Francisella tularensis subsp. novicida (strain U112)).